Consider the following 463-residue polypeptide: L-seryl-tRNA(Sec) selenium transferase (463 aa).

K295 is modified (N6-(pyridoxal phosphate)lysine).

It belongs to the SelA family. In terms of assembly, homodecamer; pentamer of dimers. Binds only one seryl-tRNA(Sec) per dimer. Pyridoxal 5'-phosphate is required as a cofactor.

It localises to the cytoplasm. It catalyses the reaction L-seryl-tRNA(Sec) + selenophosphate + H(+) = L-selenocysteinyl-tRNA(Sec) + phosphate. It participates in aminoacyl-tRNA biosynthesis; selenocysteinyl-tRNA(Sec) biosynthesis; selenocysteinyl-tRNA(Sec) from L-seryl-tRNA(Sec) (bacterial route): step 1/1. Functionally, converts seryl-tRNA(Sec) to selenocysteinyl-tRNA(Sec) required for selenoprotein biosynthesis. In Salmonella typhimurium (strain LT2 / SGSC1412 / ATCC 700720), this protein is L-seryl-tRNA(Sec) selenium transferase.